We begin with the raw amino-acid sequence, 135 residues long: Histone H3 (135 aa).

The disordered stretch occupies residues 1–40 (MARTKQTARKSTGGKAPRKAVATKARKTAPPVGGVKKPHR). The span at 19 to 31 (KAVATKARKTAPP) shows a compositional bias: low complexity.

The protein belongs to the histone H3 family. In terms of assembly, the nucleosome is a histone octamer containing two molecules each of H2A, H2B, H3 and H4 assembled in one H3-H4 heterotetramer and two H2A-H2B heterodimers. The octamer wraps approximately 147 bp of DNA.

It localises to the nucleus. It is found in the chromosome. Functionally, core component of nucleosome. Nucleosomes wrap and compact DNA into chromatin, limiting DNA accessibility to the cellular machineries which require DNA as a template. Histones thereby play a central role in transcription regulation, DNA repair, DNA replication and chromosomal stability. DNA accessibility is regulated via a complex set of post-translational modifications of histones, also called histone code, and nucleosome remodeling. The chain is Histone H3 from Mastigamoeba balamuthi (Phreatamoeba balamuthi).